The following is a 311-amino-acid chain: Methionyl-tRNA formyltransferase (311 aa).

A (6S)-5,6,7,8-tetrahydrofolate-binding site is contributed by 112-115 (SLLP).

The protein belongs to the Fmt family.

It catalyses the reaction L-methionyl-tRNA(fMet) + (6R)-10-formyltetrahydrofolate = N-formyl-L-methionyl-tRNA(fMet) + (6S)-5,6,7,8-tetrahydrofolate + H(+). Attaches a formyl group to the free amino group of methionyl-tRNA(fMet). The formyl group appears to play a dual role in the initiator identity of N-formylmethionyl-tRNA by promoting its recognition by IF2 and preventing the misappropriation of this tRNA by the elongation apparatus. The sequence is that of Methionyl-tRNA formyltransferase from Bradyrhizobium diazoefficiens (strain JCM 10833 / BCRC 13528 / IAM 13628 / NBRC 14792 / USDA 110).